The sequence spans 213 residues: MKLGKIALAMTALIAGTTAFAGTITGSSNVTFLAFDGQKVRRNTNLQVNDTNLHQVVVEISSIYQSGSDSAFFESQPIILTFEGSTEDIKILAPSLNSEFDIAQFKKSPSFKIETVSGKKLTYKQDFLKGEGFMPNSNIINNLANYNIGEGVAAVQKFALSTMPITMANNTNKVNKGKIVVQGENVTEQQLQYWFQQADKETQKRFLDWAKKQ.

Positions 1–21 are cleaved as a signal peptide; sequence MKLGKIALAMTALIAGTTAFA.

It belongs to the UPF0319 family.

This Glaesserella parasuis serovar 5 (strain SH0165) (Haemophilus parasuis) protein is UPF0319 protein HAPS_0727.